The sequence spans 1410 residues: Condensin-1 complex subunit CAP-D2 (1410 aa).

Residues 469–480 (LEPTEHASKEST) are compositionally biased toward basic and acidic residues. 4 disordered regions span residues 469–492 (LEPT…DGEI), 504–525 (HQDS…EKDV), 860–879 (KTKK…NLEA), and 1208–1410 (KEQE…GSRS). Residues 869 to 879 (ESQNTEENLEA) are compositionally biased toward polar residues. A compositionally biased stretch (basic and acidic residues) spans 1208–1226 (KEQEETARNAEVHREKTKT). Acidic residues-rich tracts occupy residues 1240–1284 (PVEE…EEPD) and 1306–1319 (IETE…DSEP). Over residues 1323–1339 (QCGTTNPRSLNRKTSGD) the composition is skewed to polar residues. Residues 1342–1365 (IETESEEEQSDSEEEPSDSEEEPD) show a composition bias toward acidic residues. A compositionally biased stretch (polar residues) spans 1368-1379 (QCGTTNPRSLNQ).

The protein belongs to the CND1 (condensin subunit 1) family. Component of the condensin complex. Present in buds.

Its subcellular location is the chromosome. It localises to the nucleus. Essential protein. Regulatory subunit of the condensin complex, a complex required for conversion of interphase chromatin into mitotic-like condense chromosomes. The condensin complex probably introduces positive supercoils into relaxed DNA in the presence of type I topoisomerases and converts nicked DNA into positive knotted forms in the presence of type II topoisomerases. Required for fertility, growth and euchromatin organization, but not for sister chromatid cohesion. Necessary to maintain normal structural integrity of the meiotic chromosomes during the two nuclear divisions of gametogenesis, especially to maintain compaction of the centromeric repeats and 45S rDNA. Also seems to be involved in crossover formation during meiotic prophase I. Prevents centromeric and pericentromeric heterochromatin repeats association. Contributes to the induction of stress-responsive genes in response to stress treatment. The polypeptide is Condensin-1 complex subunit CAP-D2 (Arabidopsis thaliana (Mouse-ear cress)).